Here is a 274-residue protein sequence, read N- to C-terminus: Dermonecrotic toxin LarSicTox-alphaIB2bii (274 aa).

Residue histidine 3 is part of the active site. The Mg(2+) site is built by glutamate 23 and aspartate 25. The active-site Nucleophile is the histidine 39. 2 disulfide bridges follow: cysteine 43–cysteine 49 and cysteine 45–cysteine 188. Aspartate 83 contributes to the Mg(2+) binding site. N-linked (GlcNAc...) asparagine glycosylation is present at asparagine 251.

The protein belongs to the arthropod phospholipase D family. Class II subfamily. Mg(2+) is required as a cofactor. In terms of tissue distribution, expressed by the venom gland.

Its subcellular location is the secreted. The enzyme catalyses an N-(acyl)-sphingosylphosphocholine = an N-(acyl)-sphingosyl-1,3-cyclic phosphate + choline. It carries out the reaction an N-(acyl)-sphingosylphosphoethanolamine = an N-(acyl)-sphingosyl-1,3-cyclic phosphate + ethanolamine. It catalyses the reaction a 1-acyl-sn-glycero-3-phosphocholine = a 1-acyl-sn-glycero-2,3-cyclic phosphate + choline. The catalysed reaction is a 1-acyl-sn-glycero-3-phosphoethanolamine = a 1-acyl-sn-glycero-2,3-cyclic phosphate + ethanolamine. Functionally, dermonecrotic toxins cleave the phosphodiester linkage between the phosphate and headgroup of certain phospholipids (sphingolipid and lysolipid substrates), forming an alcohol (often choline) and a cyclic phosphate. This toxin acts on sphingomyelin (SM). It may also act on ceramide phosphoethanolamine (CPE), lysophosphatidylcholine (LPC) and lysophosphatidylethanolamine (LPE), but not on lysophosphatidylserine (LPS), and lysophosphatidylglycerol (LPG). It acts by transphosphatidylation, releasing exclusively cyclic phosphate products as second products. Induces dermonecrosis, hemolysis, increased vascular permeability, edema, inflammatory response, and platelet aggregation. This chain is Dermonecrotic toxin LarSicTox-alphaIB2bii, found in Loxosceles arizonica (Arizona brown spider).